The following is a 309-amino-acid chain: NADH-cytochrome b5 reductase 1 (309 aa).

Residues 31-51 traverse the membrane as a helical segment; the sequence is DWVVYSVALALALGTWKFFQL. An FAD-binding FR-type domain is found at 60–168; the sequence is TKFQEFELKE…RGPKGAFVYQ (109 aa). FAD-binding positions include 148–163 and 174–208; these read AGLS…GPKG and HFGM…QVDL.

The protein belongs to the flavoprotein pyridine nucleotide cytochrome reductase family. Monomer. Component of the 2-(3-amino-3-carboxypropyl)histidine synthase complex composed of DPH1, DPH2, DPH3 and a NADH-dependent reductase, predominantly CBR1. Requires FAD as cofactor.

The protein localises to the mitochondrion outer membrane. It catalyses the reaction 2 Fe(III)-[cytochrome b5] + NADH = 2 Fe(II)-[cytochrome b5] + NAD(+) + H(+). The enzyme catalyses 2 Fe(3+)-[Dph3] + NADH = 2 Fe(2+)-[Dph3] + NAD(+) + H(+). Its pathway is protein modification; peptidyl-diphthamide biosynthesis. In terms of biological role, NADH-dependent reductase for DPH3 and cytochrome b5. Required for the first step of diphthamide biosynthesis, a post-translational modification of histidine which occurs in elongation factor 2. DPH1 and DPH2 transfer a 3-amino-3-carboxypropyl (ACP) group from S-adenosyl-L-methionine (SAM) to a histidine residue, the reaction is assisted by a reduction system comprising DPH3 and a NADH-dependent reductase, predominantly CBR1. By reducing DPH3, also involved in the formation of the tRNA wobble base modification mcm5s 2U (5-methoxycarbonylmethyl-2-thiouridine), mediated by the elongator complex. The cytochrome b5/NADH cytochrome b5 reductase electron transfer system supports the catalytic activity of several sterol biosynthetic enzymes. The protein is NADH-cytochrome b5 reductase 1 (CBR1) of Pyricularia oryzae (strain 70-15 / ATCC MYA-4617 / FGSC 8958) (Rice blast fungus).